The primary structure comprises 233 residues: uncharacterized protein (233 aa).

A signal peptide spans 1 to 23; the sequence is MEIKYFLVLLVGFLLVLPSIVNP. Positions 42–217 are disordered; the sequence is LDVNNPHNPN…HHHHQEASEC (176 aa). Positions 45–64 are enriched in low complexity; sequence NNPHNPNNNPHNPHNPNNNP. Positions 65 to 211 are enriched in basic residues; that stretch reads HHPHHLHHHH…HPHPHHHHHH (147 aa).

The protein resides in the secreted. This is an uncharacterized protein from Dictyostelium discoideum (Social amoeba).